A 181-amino-acid polypeptide reads, in one-letter code: Putative manganese efflux pump MntP (181 aa).

Helical transmembrane passes span 3–23 (LIFLSIALAMDSVAISMANGA), 42–62 (IFQAFMPVIGYFLGLAFVGFI), 63–83 (SYIDHYVAFAILLFLGIKMIK), 101–121 (LMLGAFATSLDALAVGITFSF), 124–144 (INIAIAAFVIGLVCFVLCVIA), and 160–180 (LVLGGVILILIGCKIIITHLI).

Belongs to the MntP (TC 9.B.29) family.

The protein resides in the cell inner membrane. In terms of biological role, probably functions as a manganese efflux pump. This Campylobacter fetus subsp. fetus (strain 82-40) protein is Putative manganese efflux pump MntP.